The following is a 456-amino-acid chain: MSHSGLRSTSTSYRRTLGSSPVPSSYSSSSRLSTSRHFGSPSPGPSSRSSSSAFRVRSSTPVRVSLDRVDFSVAEAVNQEFLTTRSNEKAELQELNDRFASFIEKVRYLEQQNAVLVTEINQARSKEPTRASDLCQQELRELRKQLELLGKDRDHIQVERDNFAEDLAFLKQRLDEEVHKREDAENNLVLFRKDVDDATLSRLELERKIESLMDEIEFLKKLHEEELNDVQVSVQAQPVHMEIEAAKQPDLTSALRDIRSQYETIAAKNVQESEDWYKSKFADLSDAANRNSEALRQAKQDMNESRRQIQSLTCEVDGLKGTNEALLRQMKNMEEQFGMEAANYQDTIGGLEQEVQHMKEEMSRHLREYQDLLNVKMALDIEIATYRKLLEGEESRIAVPIHSLTSLSIKSPAAPEIDPSTETHTRKTVAIKTIETRDGEQVVTESRKEQSSEGEK.

Positions 1-14 (MSHSGLRSTSTSYR) are enriched in polar residues. Positions 1–55 (MSHSGLRSTSTSYRRTLGSSPVPSSYSSSSRLSTSRHFGSPSPGPSSRSSSSAFR) are disordered. Positions 1–90 (MSHSGLRSTS…FLTTRSNEKA (90 aa)) are head. The span at 16–55 (TLGSSPVPSSYSSSSRLSTSRHFGSPSPGPSSRSSSSAFR) shows a compositional bias: low complexity. Residues 88–397 (EKAELQELND…KLLEGEESRI (310 aa)) enclose the IF rod domain. The coil 1A stretch occupies residues 91 to 123 (ELQELNDRFASFIEKVRYLEQQNAVLVTEINQA). Residues 124 to 134 (RSKEPTRASDL) form a linker 1 region. The coil 1B stretch occupies residues 135–230 (CQQELRELRK…KLHEEELNDV (96 aa)). The linker 2 stretch occupies residues 231–252 (QVSVQAQPVHMEIEAAKQPDLT). The interval 253 to 395 (SALRDIRSQY…YRKLLEGEES (143 aa)) is coil 2. The tract at residues 396-456 (RIAVPIHSLT…RKEQSSEGEK (61 aa)) is tail. Residues 411-456 (SPAAPEIDPSTETHTRKTVAIKTIETRDGEQVVTESRKEQSSEGEK) form a disordered region. Over residues 434–456 (IETRDGEQVVTESRKEQSSEGEK) the composition is skewed to basic and acidic residues.

The protein belongs to the intermediate filament family. As to quaternary structure, forms homodimers (in vitro). Homopolymerizes into a filamentous network (in vitro).

Its subcellular location is the cytoplasm. The protein localises to the cytoskeleton. It localises to the cell projection. The protein resides in the axon. It is found in the perikaryon. In terms of biological role, class-III neuronal intermediate filament protein. My form an independent structural network without the involvement of other neurofilaments or may cooperate with other neuronal intermediate filament proteins to form a filamentous network. This is Peripherin (prph) from Xenopus laevis (African clawed frog).